Here is a 651-residue protein sequence, read N- to C-terminus: Carboxypeptidase S1 homolog A (651 aa).

The signal sequence occupies residues 1–19 (MHLATGLAVALPFIGAASA). Cys50 and Cys121 are oxidised to a cystine. N-linked (GlcNAc...) asparagine glycans are attached at residues Asn77, Asn125, Asn128, Asn161, Asn184, and Asn202. The active site involves Ser238. Residues Asn260, Asn299, Asn308, Asn347, and Asn410 are each glycosylated (N-linked (GlcNAc...) asparagine). 2 cysteine pairs are disulfide-bonded: Cys325–Cys361 and Cys332–Cys354. The active site involves Asp458. Cys461 is a substrate binding site. 2 N-linked (GlcNAc...) asparagine glycosylation sites follow: Asn474 and Asn504. His515 is a catalytic residue. Glu516 is a substrate binding site. Residues 604–630 (KSPAGKKQGPPPTSTSPPSPTSSSEGS) form a disordered region. Pro residues predominate over residues 612 to 623 (GPPPTSTSPPSP). Ser625 carries the GPI-anchor amidated serine lipid modification. Residues 626 to 651 (SSEGSVKEFSVSVLGVSVLAAITFFL) constitute a propeptide, removed in mature form.

It belongs to the peptidase S10 family.

It is found in the cell membrane. The catalysed reaction is Preferential release of a C-terminal arginine or lysine residue.. Functionally, extracellular serine carboxypeptidase that contributes to pathogenicity. The protein is Carboxypeptidase S1 homolog A (SCPA) of Arthroderma otae (strain ATCC MYA-4605 / CBS 113480) (Microsporum canis).